Reading from the N-terminus, the 193-residue chain is Interferon type A3 (193 aa).

The first 31 residues, 1–31, serve as a signal peptide directing secretion; sequence MAVPASPQHPRGYGILLLTLLLKALATTASA. Cystine bridges form between Cys-32–Cys-129, Cys-61–Cys-155, and Cys-68–Cys-168. 4 N-linked (GlcNAc...) asparagine glycosylation sites follow: Asn-65, Asn-71, Asn-108, and Asn-186.

It belongs to the alpha/beta interferon family.

It localises to the secreted. Functionally, has antiviral activities. In Gallus gallus (Chicken), this protein is Interferon type A3 (IFNA3).